The primary structure comprises 426 residues: Mediator of RNA polymerase II transcription subunit 1 (426 aa).

The segment at 319 to 349 (ISTSNSGSVQPKPRRKSSVLSNRRPSMTDSM) is disordered. Positions 336–347 (SVLSNRRPSMTD) are enriched in polar residues.

Belongs to the Mediator complex subunit 1 family. As to quaternary structure, component of the Mediator complex.

The protein resides in the nucleus. Its function is as follows. Component of the Mediator complex, a coactivator involved in the regulated transcription of nearly all RNA polymerase II-dependent genes. Mediator functions as a bridge to convey information from gene-specific regulatory proteins to the basal RNA polymerase II transcription machinery. Mediator is recruited to promoters by direct interactions with regulatory proteins and serves as a scaffold for the assembly of a functional preinitiation complex with RNA polymerase II and the general transcription factors. The sequence is that of Mediator of RNA polymerase II transcription subunit 1 (MED1) from Kluyveromyces lactis (strain ATCC 8585 / CBS 2359 / DSM 70799 / NBRC 1267 / NRRL Y-1140 / WM37) (Yeast).